A 227-amino-acid polypeptide reads, in one-letter code: TMF-regulated nuclear protein 1 (227 aa).

Disordered regions lie at residues 1-72 (MPGC…ELQR) and 200-227 (GRLRRGHGPEPDSPFRRSPPRGPASPQR). Positions 22 to 55 (SPPPPWDPMPSSQPPPPTPTLTPTPTPGQSPPLP) are enriched in pro residues.

Interacts with TMF1; may regulate TRNP1 proteasomal degradation. Post-translationally, ubiquitinated, leading to its degradation by the proteasome.

It is found in the nucleus. In terms of biological role, DNA-binding factor that regulates the expression of a subset of genes and plays a key role in tangential, radial, and lateral expansion of the brain neocortex. Regulates neural stem cells proliferation and the production of intermediate neural progenitors and basal radial glial cells affecting the process of cerebral cortex gyrification. May control the proliferation rate of cells by regulating their progression through key cell-cycle transition points. The chain is TMF-regulated nuclear protein 1 (TRNP1) from Homo sapiens (Human).